The sequence spans 134 residues: Small ribosomal subunit protein uS11 (134 aa).

The protein belongs to the universal ribosomal protein uS11 family. Part of the 30S ribosomal subunit. Interacts with proteins S7 and S18. Binds to IF-3.

Its function is as follows. Located on the platform of the 30S subunit, it bridges several disparate RNA helices of the 16S rRNA. Forms part of the Shine-Dalgarno cleft in the 70S ribosome. This is Small ribosomal subunit protein uS11 from Frankia alni (strain DSM 45986 / CECT 9034 / ACN14a).